Reading from the N-terminus, the 1042-residue chain is Isoleucine--tRNA ligase (1042 aa).

Residues 48 to 58 (PFATGLPHFGH) carry the 'HIGH' region motif. Positions 594-598 (KMSKS) match the 'KMSKS' region motif. Lys597 contacts ATP.

Belongs to the class-I aminoacyl-tRNA synthetase family. IleS type 2 subfamily. As to quaternary structure, monomer. Requires Zn(2+) as cofactor.

Its subcellular location is the cytoplasm. It carries out the reaction tRNA(Ile) + L-isoleucine + ATP = L-isoleucyl-tRNA(Ile) + AMP + diphosphate. In terms of biological role, catalyzes the attachment of isoleucine to tRNA(Ile). As IleRS can inadvertently accommodate and process structurally similar amino acids such as valine, to avoid such errors it has two additional distinct tRNA(Ile)-dependent editing activities. One activity is designated as 'pretransfer' editing and involves the hydrolysis of activated Val-AMP. The other activity is designated 'posttransfer' editing and involves deacylation of mischarged Val-tRNA(Ile). The sequence is that of Isoleucine--tRNA ligase from Borrelia garinii subsp. bavariensis (strain ATCC BAA-2496 / DSM 23469 / PBi) (Borreliella bavariensis).